Here is a 431-residue protein sequence, read N- to C-terminus: Histidine--tRNA ligase (431 aa).

This sequence belongs to the class-II aminoacyl-tRNA synthetase family. As to quaternary structure, homodimer.

Its subcellular location is the cytoplasm. The enzyme catalyses tRNA(His) + L-histidine + ATP = L-histidyl-tRNA(His) + AMP + diphosphate + H(+). The polypeptide is Histidine--tRNA ligase (Neisseria meningitidis serogroup C / serotype 2a (strain ATCC 700532 / DSM 15464 / FAM18)).